The following is a 63-amino-acid chain: Cytotoxin homolog S3C2 (63 aa).

Disulfide bonds link cysteine 3-cysteine 22, cysteine 15-cysteine 40, cysteine 44-cysteine 55, and cysteine 56-cysteine 61.

Belongs to the three-finger toxin family. Short-chain subfamily. Orphan group XVI sub-subfamily. In terms of tissue distribution, expressed by the venom gland.

The protein localises to the secreted. The chain is Cytotoxin homolog S3C2 from Aspidelaps scutatus (Shield-nose snake).